Consider the following 595-residue polypeptide: Estrogen receptor (595 aa).

The modulating (transactivation AF-1); mediates interaction with MACROD1 stretch occupies residues 1 to 184 (MTMTLHTKAS…AMESAKETRY (184 aa)). O-linked (GlcNAc) serine glycosylation occurs at Ser10. Residues 35-47 (LERPLGEVYVDSS) form a required for interaction with NCOA1 region. Residues 35 to 174 (LERPLGEVYV…LASTSDKGSM (140 aa)) are interaction with DDX5; self-association. Ser104 and Ser106 each carry phosphoserine; by CDK2. Ser118 carries the post-translational modification Phosphoserine. Residues 144–174 (AGPPAFYRPNSDNRRQGGRERLASTSDKGSM) form a disordered region. Residues 154 to 165 (SDNRRQGGRERL) show a composition bias toward basic and acidic residues. Residue Ser167 is modified to Phosphoserine; by CK2. 2 consecutive NR C4-type zinc fingers follow at residues 185–205 (CAVCNDYASGYHYGVWSCEGC) and 221–245 (CPATNQCTIDKNRRKSCQACRLRKC). Positions 185-250 (CAVCNDYASG…RLRKCYEVGM (66 aa)) form a DNA-binding region, nuclear receptor. Residues 185–310 (CAVCNDYASG…TKKNSPVLSL (126 aa)) are mediates interaction with DNTTIP2. The tract at residues 251-310 (MKGGIRKDRRGGRMLKHKRQRDDGEGRNEAVPPGDMRSANLWPSPLLIKHTKKNSPVLSL) is hinge. Over residues 257–269 (KDRRGGRMLKHKR) the composition is skewed to basic residues. A disordered region spans residues 257-288 (KDRRGGRMLKHKRQRDDGEGRNEAVPPGDMRS). Arg260 bears the Asymmetric dimethylarginine; by PRMT1 mark. Residues 262–595 (GRMLKHKRQR…GEAENFPTTI (334 aa)) form an interaction with AKAP13 region. The tract at residues 264-594 (MLKHKRQRDD…TGEAENFPTT (331 aa)) is self-association. An NR LBD domain is found at 311–547 (TADQMISALL…DLLLEMLDAH (237 aa)). The tract at residues 311 to 594 (TADQMISALL…TGEAENFPTT (284 aa)) is transactivation AF-2. 17beta-estradiol-binding residues include Glu353 and Arg394. A lipid anchor (S-palmitoyl cysteine) is attached at Cys447. Residue His524 coordinates 17beta-estradiol. Tyr537 bears the Phosphotyrosine; by Tyr-kinases mark. Residues 551 to 575 (APTNLGGPPPEDMSQSQLATSGSTP) form a disordered region. A compositionally biased stretch (polar residues) spans 563-575 (MSQSQLATSGSTP).

The protein belongs to the nuclear hormone receptor family. NR3 subfamily. As to quaternary structure, binds DNA as a homodimer. Can form a heterodimer with ESR2. Interacts with coactivator NCOA5. Interacts with PELP1, the interaction is enhanced by 17-beta-estradiol; the interaction increases ESR1 transcriptional activity. Interacts with NCOA7; the interaction is ligand-inducible. Interacts with AKAP13, CUEDC2, HEXIM1, KDM5A, MAP1S, SMARD1, and UBE1C. Interacts with MUC1; the interaction is stimulated by 7 beta-estradiol (E2) and enhances ESR1-mediated transcription. Interacts with DNTTIP2, and UIMC1. Interacts with KMT2D/MLL2. Interacts with ATAD2; the interaction is enhanced by estradiol. Interacts with KIF18A and LDB1. Interacts with RLIM (via its C-terminus). Interacts with MACROD1. Interacts with SH2D4A and PLCG. Interacts with SH2D4A; the interaction blocks binding to PLCG and inhibits estrogen-induced cell proliferation. Interacts with DYNLL1. Interacts with CCDC62; the interaction requires estradiol and appears to enhance the transcription of target genes. Interacts with NR2C1; the interaction prevents homodimerization of ESR1 and suppresses its transcriptional activity and cell growth. Interacts with DNAAF4. Interacts with PRMT2. Interacts with RBFOX2. Interacts with EP300; the interaction is estrogen-dependent and enhanced by CITED1. Interacts with CITED1; the interaction is estrogen-dependent. Interacts with FAM120B, FOXL2, PHB2 and SLC30A9. Interacts with coactivators NCOA3 and NCOA6. Interacts with STK3/MST2 only in the presence of SAV1 and vice-versa. Binds to CSNK1D. Interacts with NCOA2; NCOA2 can interact with ESR1 AF-1 and AF-2 domains simultaneously and mediate their transcriptional synergy. Interacts with DDX5. Interacts with NCOA1; the interaction seems to require a self-association of N-terminal and C-terminal regions. Interacts with ZNF366, DDX17, NFKB1, RELA, SP1 and SP3. Interacts with NRIP1. Interacts with GPER1; the interaction occurs in an estrogen-dependent manner. Interacts with CLOCK and the interaction is stimulated by estrogen. Interacts with TRIP4 (ufmylated); estrogen dependent. Interacts with LMTK3; the interaction phosphorylates ESR1 (in vitro) and protects it against proteasomal degradation. Interacts with CCAR2 (via N-terminus) in a ligand-independent manner. Interacts with ZFHX3. Interacts with SFR1 in a ligand-dependent and -independent manner. Interacts with DCAF13, LATS1 and DCAF1; regulates ESR1 ubiquitination and ubiquitin-mediated proteasomal degradation. Interacts (via DNA-binding domain) with POU4F2 (C-terminus); this interaction increases the estrogen receptor ESR1 transcriptional activity in a DNA- and ligand 17-beta-estradiol-independent manner. Interacts with ESRRB isoform 1. Interacts with UBE3A and WBP2. Interacts with GTF2B. Interacts with RBM39. In the absence of hormonal ligand, interacts with TACC1. Interacts with PI3KR1 or PI3KR2 and PTK2/FAK1. Interacts with SRC. Interacts with BAG1; the interaction is promoted in the absence of estradiol (17-beta-estradiol/E2). Interacts with and ubiquitinated by STUB1; the interaction is promoted in the absence of estradiol (17-beta-estradiol/E2). Interacts with NEDD8. In terms of processing, phosphorylated by cyclin A/CDK2 and CK1. Phosphorylation probably enhances transcriptional activity. Dephosphorylation at Ser-118 by PPP5C inhibits its transactivation activity. Phosphorylated by LMTK3 (in vitro). Post-translationally, ubiquitinated; regulated by LATS1 via DCAF1 it leads to ESR1 proteasomal degradation. Deubiquitinated by OTUB1. Ubiquitinated by STUB1/CHIP; in the CA1 hippocampal region following loss of endogenous circulating estradiol (17-beta-estradiol/E2). Ubiquitinated by UBR5, leading to its degradation: UBR5 specifically recognizes and binds ligand-bound ESR1 when it is not associated with coactivators (NCOAs). In presence of NCOAs, the UBR5-degron is not accessible, preventing its ubiquitination and degradation. Palmitoylated at Cys-447 by ZDHHC7 and ZDHHC21. Palmitoylation is required for plasma membrane targeting and for rapid intracellular signaling via ERK and AKT kinases and cAMP generation, but not for signaling mediated by the nuclear hormone receptor. In terms of processing, dimethylated by PRMT1 at Arg-260. The methylation may favor cytoplasmic localization. Demethylated by JMJD6 at Arg-260.

The protein resides in the nucleus. It localises to the cytoplasm. The protein localises to the golgi apparatus. It is found in the cell membrane. In terms of biological role, nuclear hormone receptor. The steroid hormones and their receptors are involved in the regulation of eukaryotic gene expression and affect cellular proliferation and differentiation in target tissues. Ligand-dependent nuclear transactivation involves either direct homodimer binding to a palindromic estrogen response element (ERE) sequence or association with other DNA-binding transcription factors, such as AP-1/c-Jun, c-Fos, ATF-2, Sp1 and Sp3, to mediate ERE-independent signaling. Ligand binding induces a conformational change allowing subsequent or combinatorial association with multiprotein coactivator complexes through LXXLL motifs of their respective components. Mutual transrepression occurs between the estrogen receptor (ER) and NF-kappa-B in a cell-type specific manner. Decreases NF-kappa-B DNA-binding activity and inhibits NF-kappa-B-mediated transcription from the IL6 promoter and displace RELA/p65 and associated coregulators from the promoter. Recruited to the NF-kappa-B response element of the CCL2 and IL8 promoters and can displace CREBBP. Present with NF-kappa-B components RELA/p65 and NFKB1/p50 on ERE sequences. Can also act synergistically with NF-kappa-B to activate transcription involving respective recruitment adjacent response elements; the function involves CREBBP. Can activate the transcriptional activity of TFF1. Also mediates membrane-initiated estrogen signaling involving various kinase cascades. Essential for MTA1-mediated transcriptional regulation of BRCA1 and BCAS3. Maintains neuronal survival in response to ischemic reperfusion injury when in the presence of circulating estradiol (17-beta-estradiol/E2). This is Estrogen receptor (ESR1) from Sus scrofa (Pig).